An 864-amino-acid polypeptide reads, in one-letter code: Structure-specific endonuclease subunit SLX4 (864 aa).

Over residues 35 to 54 the composition is skewed to low complexity; sequence SPLSLPSPTSLLDFLSTSTS. Disordered regions lie at residues 35–72, 89–113, 160–193, 288–318, 348–382, 413–432, and 625–771; these read SPLS…GKEV, VVSG…PGNA, KANQ…HIND, GLSD…NPPK, LSDE…EKKN, ANGH…HISN, and KTSN…ETLP. A compositionally biased stretch (basic and acidic residues) spans 58–72; it reads ARSDTDGDKTQGKEV. Polar residues-rich tracts occupy residues 160–169 and 289–306; these read KANQTVSLQP and LSDS…SATS. The span at 307–317 shows a compositional bias: basic residues; it reads KPRRVKAKNPP. Residues 659–668 are compositionally biased toward polar residues; sequence SIPQTATTQV. Residues 683–695 show a composition bias toward low complexity; the sequence is VPVPSRRSTSTSK. Polar residues predominate over residues 743-771; sequence PESFNLPTTPLTIRSGKIPSTGTASETLP.

This sequence belongs to the SLX4 family. Forms a heterodimer with SLX1. Post-translationally, phosphorylated in response to DNA damage.

It is found in the nucleus. Functionally, regulatory subunit of the SLX1-SLX4 structure-specific endonuclease that resolves DNA secondary structures generated during DNA repair and recombination. Has endonuclease activity towards branched DNA substrates, introducing single-strand cuts in duplex DNA close to junctions with ss-DNA. The sequence is that of Structure-specific endonuclease subunit SLX4 from Paracoccidioides brasiliensis (strain Pb03).